Here is a 253-residue protein sequence, read N- to C-terminus: Negative modulator of initiation of replication (253 aa).

Residues 66–112 (SNQEQQTGHGHAGEPSAVQTPESNDYAKAQPHSSGYQPGQLEGHKSE) form a disordered region. An interaction with DNA region spans residues 154 to 155 (AV).

It belongs to the SeqA family. As to quaternary structure, homodimer. Polymerizes to form helical filaments.

The protein resides in the cytoplasm. Negative regulator of replication initiation, which contributes to regulation of DNA replication and ensures that replication initiation occurs exactly once per chromosome per cell cycle. Binds to pairs of hemimethylated GATC sequences in the oriC region, thus preventing assembly of replication proteins and re-initiation at newly replicated origins. Repression is relieved when the region becomes fully methylated. This Shewanella denitrificans (strain OS217 / ATCC BAA-1090 / DSM 15013) protein is Negative modulator of initiation of replication.